The chain runs to 418 residues: S-adenosylmethionine synthase (418 aa).

Residue H16 coordinates ATP. D18 lines the Mg(2+) pocket. E44 contributes to the K(+) binding site. Residues E57 and Q100 each contribute to the L-methionine site. Positions 100 to 110 (QSPDIAQGVDS) are flexible loop. Residues 174-176 (DGK), D259, 265-266 (RK), A282, and K286 each bind ATP. Position 259 (D259) interacts with L-methionine. K290 serves as a coordination point for L-methionine.

This sequence belongs to the AdoMet synthase family. In terms of assembly, homotetramer; dimer of dimers. It depends on Mg(2+) as a cofactor. K(+) is required as a cofactor.

Its subcellular location is the cytoplasm. The catalysed reaction is L-methionine + ATP + H2O = S-adenosyl-L-methionine + phosphate + diphosphate. The protein operates within amino-acid biosynthesis; S-adenosyl-L-methionine biosynthesis; S-adenosyl-L-methionine from L-methionine: step 1/1. Functionally, catalyzes the formation of S-adenosylmethionine (AdoMet) from methionine and ATP. The overall synthetic reaction is composed of two sequential steps, AdoMet formation and the subsequent tripolyphosphate hydrolysis which occurs prior to release of AdoMet from the enzyme. The polypeptide is S-adenosylmethionine synthase (Acaryochloris marina (strain MBIC 11017)).